A 151-amino-acid chain; its full sequence is Acidic phospholipase A2 6 (151 aa).

The first 27 residues, 1–27, serve as a signal peptide directing secretion; that stretch reads MYPAHLLVLLAVCVSLLGAASIPARPL. Disulfide bonds link C38–C104, C54–C151, C56–C72, C71–C132, C78–C125, C88–C118, and C111–C123. Residues Y55, G57, and G59 each coordinate Ca(2+). H75 is a catalytic residue. Residue D76 participates in Ca(2+) binding. The active site involves D126.

Belongs to the phospholipase A2 family. Group I subfamily. D49 sub-subfamily. It depends on Ca(2+) as a cofactor. In terms of tissue distribution, expressed by the venom gland.

It is found in the secreted. The catalysed reaction is a 1,2-diacyl-sn-glycero-3-phosphocholine + H2O = a 1-acyl-sn-glycero-3-phosphocholine + a fatty acid + H(+). In terms of biological role, PLA2 catalyzes the calcium-dependent hydrolysis of the 2-acyl groups in 3-sn-phosphoglycerides. This is Acidic phospholipase A2 6 from Tropidechis carinatus (Australian rough-scaled snake).